Consider the following 447-residue polypeptide: Argininosuccinate synthase (447 aa).

ATP-binding positions include 20–28 (AFSGGLDTS) and A46. Y102 lines the L-citrulline pocket. 2 residues coordinate ATP: G132 and T134. The L-aspartate site is built by T134, N138, and D139. N138 serves as a coordination point for L-citrulline. D139 contributes to the ATP binding site. L-citrulline is bound by residues R142 and S195. D197 is an ATP binding site. T204, E206, and E283 together coordinate L-citrulline.

It belongs to the argininosuccinate synthase family. Type 2 subfamily. In terms of assembly, homotetramer.

It is found in the cytoplasm. It catalyses the reaction L-citrulline + L-aspartate + ATP = 2-(N(omega)-L-arginino)succinate + AMP + diphosphate + H(+). It participates in amino-acid biosynthesis; L-arginine biosynthesis; L-arginine from L-ornithine and carbamoyl phosphate: step 2/3. The protein is Argininosuccinate synthase (argG) of Neisseria meningitidis serogroup A / serotype 4A (strain DSM 15465 / Z2491).